We begin with the raw amino-acid sequence, 407 residues long: Probable tRNA sulfurtransferase (407 aa).

Residues 61–165 form the THUMP domain; the sequence is EEMCNRLKKV…LDAIYMYDQV (105 aa). Residues 183–184, 208–209, arginine 265, glycine 287, and glutamine 296 contribute to the ATP site; these read ML and HF.

Belongs to the ThiI family.

It localises to the cytoplasm. The enzyme catalyses [ThiI sulfur-carrier protein]-S-sulfanyl-L-cysteine + a uridine in tRNA + 2 reduced [2Fe-2S]-[ferredoxin] + ATP + H(+) = [ThiI sulfur-carrier protein]-L-cysteine + a 4-thiouridine in tRNA + 2 oxidized [2Fe-2S]-[ferredoxin] + AMP + diphosphate. It carries out the reaction [ThiS sulfur-carrier protein]-C-terminal Gly-Gly-AMP + S-sulfanyl-L-cysteinyl-[cysteine desulfurase] + AH2 = [ThiS sulfur-carrier protein]-C-terminal-Gly-aminoethanethioate + L-cysteinyl-[cysteine desulfurase] + A + AMP + 2 H(+). The protein operates within cofactor biosynthesis; thiamine diphosphate biosynthesis. In terms of biological role, catalyzes the ATP-dependent transfer of a sulfur to tRNA to produce 4-thiouridine in position 8 of tRNAs, which functions as a near-UV photosensor. Also catalyzes the transfer of sulfur to the sulfur carrier protein ThiS, forming ThiS-thiocarboxylate. This is a step in the synthesis of thiazole, in the thiamine biosynthesis pathway. The sulfur is donated as persulfide by IscS. This is Probable tRNA sulfurtransferase from Staphylococcus saprophyticus subsp. saprophyticus (strain ATCC 15305 / DSM 20229 / NCIMB 8711 / NCTC 7292 / S-41).